A 201-amino-acid polypeptide reads, in one-letter code: 3-isopropylmalate dehydratase small subunit (201 aa).

Belongs to the LeuD family. LeuD type 1 subfamily. As to quaternary structure, heterodimer of LeuC and LeuD.

It catalyses the reaction (2R,3S)-3-isopropylmalate = (2S)-2-isopropylmalate. It functions in the pathway amino-acid biosynthesis; L-leucine biosynthesis; L-leucine from 3-methyl-2-oxobutanoate: step 2/4. In terms of biological role, catalyzes the isomerization between 2-isopropylmalate and 3-isopropylmalate, via the formation of 2-isopropylmaleate. The chain is 3-isopropylmalate dehydratase small subunit from Salmonella schwarzengrund (strain CVM19633).